Consider the following 630-residue polypeptide: 1-deoxy-D-xylulose-5-phosphate synthase (630 aa).

Residues His-72 and 113–115 (GHS) contribute to the thiamine diphosphate site. A Mg(2+)-binding site is contributed by Asp-144. Residues 145 to 146 (GA), Asn-173, Tyr-284, and Glu-367 contribute to the thiamine diphosphate site. Residue Asn-173 coordinates Mg(2+).

This sequence belongs to the transketolase family. DXPS subfamily. In terms of assembly, homodimer. The cofactor is Mg(2+). Thiamine diphosphate serves as cofactor.

It carries out the reaction D-glyceraldehyde 3-phosphate + pyruvate + H(+) = 1-deoxy-D-xylulose 5-phosphate + CO2. It participates in metabolic intermediate biosynthesis; 1-deoxy-D-xylulose 5-phosphate biosynthesis; 1-deoxy-D-xylulose 5-phosphate from D-glyceraldehyde 3-phosphate and pyruvate: step 1/1. In terms of biological role, catalyzes the acyloin condensation reaction between C atoms 2 and 3 of pyruvate and glyceraldehyde 3-phosphate to yield 1-deoxy-D-xylulose-5-phosphate (DXP). The sequence is that of 1-deoxy-D-xylulose-5-phosphate synthase from Geobacillus thermodenitrificans (strain NG80-2).